Consider the following 127-residue polypeptide: Large ribosomal subunit protein uL22 (127 aa).

The protein belongs to the universal ribosomal protein uL22 family. Part of the 50S ribosomal subunit.

Functionally, this protein binds specifically to 23S rRNA; its binding is stimulated by other ribosomal proteins, e.g. L4, L17, and L20. It is important during the early stages of 50S assembly. It makes multiple contacts with different domains of the 23S rRNA in the assembled 50S subunit and ribosome. Its function is as follows. The globular domain of the protein is located near the polypeptide exit tunnel on the outside of the subunit, while an extended beta-hairpin is found that lines the wall of the exit tunnel in the center of the 70S ribosome. This Rhizorhabdus wittichii (strain DSM 6014 / CCUG 31198 / JCM 15750 / NBRC 105917 / EY 4224 / RW1) (Sphingomonas wittichii) protein is Large ribosomal subunit protein uL22.